Reading from the N-terminus, the 224-residue chain is Phosphoribosyltransferase domain-containing protein 1 (224 aa).

Residues Glu140 and Asp141 each contribute to the Mg(2+) site. GMP-binding positions include 140-148 (EDIINTGRT), Lys172, 193-194 (FV), and Asp200. Mg(2+) is bound at residue Asp200.

This sequence belongs to the purine/pyrimidine phosphoribosyltransferase family.

The polypeptide is Phosphoribosyltransferase domain-containing protein 1 (prtfdc1) (Xenopus tropicalis (Western clawed frog)).